The primary structure comprises 465 residues: GTPase Der (465 aa).

EngA-type G domains follow at residues 3–167 (PLVA…PEEG) and 179–352 (VRIA…ASAT). GTP contacts are provided by residues 9–16 (GRPNVGKS), 57–61 (DTGGI), 119–122 (NKID), 185–192 (GRPNVGKS), 232–236 (DTAGL), and 297–300 (NKWD). In terms of domain architecture, KH-like spans 353–437 (HEFSTSEVNQ…PVRFIFREGA (85 aa)).

This sequence belongs to the TRAFAC class TrmE-Era-EngA-EngB-Septin-like GTPase superfamily. EngA (Der) GTPase family. As to quaternary structure, associates with the 50S ribosomal subunit.

Functionally, GTPase that plays an essential role in the late steps of ribosome biogenesis. The polypeptide is GTPase Der (Xanthomonas campestris pv. campestris (strain 8004)).